The following is a 112-amino-acid chain: Protein Churchill (112 aa).

Zn(2+) contacts are provided by Cys2, Cys5, Cys30, Cys33, His59, Cys61, Cys64, His66, His71, Cys88, and Cys91.

The protein belongs to the Churchill family.

Functionally, transcriptional activator that mediates FGF signaling during neural development. Plays a role in the regulation of cell movement. Its function is as follows. Does not bind DNA by itself. The chain is Protein Churchill (CHURC1) from Homo sapiens (Human).